A 325-amino-acid chain; its full sequence is Protein ORANGE-GREEN, chloroplastic (325 aa).

The N-terminal 54 residues, 1–54 (MDRVLVASYPINHLIRPHSFRIDYCWSTCFTSRLNSGKERQKLSSRWRWRSMAS), are a transit peptide targeting the chloroplast. Residues 53 to 71 (ASDSTDSSSSSSFAPSVES) are compositionally biased toward low complexity. The segment at 53–77 (ASDSTDSSSSSSFAPSVESDPSDKT) is disordered. 2 helical membrane passes run 164–184 (LYYV…GLLA) and 217–237 (IVAS…VVEV). The tract at residues 226–317 (VGVISALMVV…CTGMAMASEH (92 aa)) is CR-type-like. A CXXCXGXG motif repeat occupies 248–255 (CKYCLGTG). A CXXCXXXG motif repeat occupies 259 to 266 (CARCSNTG). The stretch at 292–299 (CQNCSGSG) is one CXXCXGXG motif repeat. The CXXCXXXG motif repeat unit spans residues 303-310 (CPTCLCTG).

It belongs to the orange-like family.

The protein localises to the plastid. Its subcellular location is the chloroplast membrane. Functionally, involved in chloroplast differentiation in fruit flesh. This chain is Protein ORANGE-GREEN, chloroplastic, found in Cucumis melo (Muskmelon).